We begin with the raw amino-acid sequence, 236 residues long: Probable chemoreceptor glutamine deamidase CheD (236 aa).

The tract at residues 1 to 20 is disordered; sequence MIEFGKRATPQSAADAVRGD.

It belongs to the CheD family.

It carries out the reaction L-glutaminyl-[protein] + H2O = L-glutamyl-[protein] + NH4(+). Its function is as follows. Probably deamidates glutamine residues to glutamate on methyl-accepting chemotaxis receptors (MCPs), playing an important role in chemotaxis. This Ralstonia pickettii (strain 12J) protein is Probable chemoreceptor glutamine deamidase CheD.